Reading from the N-terminus, the 447-residue chain is Na(+)-translocating NADH-quinone reductase subunit A (447 aa).

Belongs to the NqrA family. In terms of assembly, composed of six subunits; NqrA, NqrB, NqrC, NqrD, NqrE and NqrF.

It catalyses the reaction a ubiquinone + n Na(+)(in) + NADH + H(+) = a ubiquinol + n Na(+)(out) + NAD(+). Its function is as follows. NQR complex catalyzes the reduction of ubiquinone-1 to ubiquinol by two successive reactions, coupled with the transport of Na(+) ions from the cytoplasm to the periplasm. NqrA to NqrE are probably involved in the second step, the conversion of ubisemiquinone to ubiquinol. The protein is Na(+)-translocating NADH-quinone reductase subunit A of Yersinia pestis bv. Antiqua (strain Angola).